The following is an 801-amino-acid chain: Phenylalanine--tRNA ligase beta subunit (801 aa).

Positions alanine 39–phenylalanine 153 constitute a tRNA-binding domain. In terms of domain architecture, B5 spans threonine 406 to threonine 481. The Mg(2+) site is built by aspartate 459, aspartate 465, glutamate 468, and glutamate 469. In terms of domain architecture, FDX-ACB spans threonine 708–arginine 801.

This sequence belongs to the phenylalanyl-tRNA synthetase beta subunit family. Type 1 subfamily. As to quaternary structure, tetramer of two alpha and two beta subunits. Requires Mg(2+) as cofactor.

It localises to the cytoplasm. It carries out the reaction tRNA(Phe) + L-phenylalanine + ATP = L-phenylalanyl-tRNA(Phe) + AMP + diphosphate + H(+). This chain is Phenylalanine--tRNA ligase beta subunit, found in Streptococcus agalactiae serotype Ia (strain ATCC 27591 / A909 / CDC SS700).